Reading from the N-terminus, the 146-residue chain is UPF0735 ACT domain-containing protein Cphy_3604 (146 aa).

Residues T70–R145 enclose the ACT domain.

It belongs to the UPF0735 family.

This Lachnoclostridium phytofermentans (strain ATCC 700394 / DSM 18823 / ISDg) (Clostridium phytofermentans) protein is UPF0735 ACT domain-containing protein Cphy_3604.